Here is a 564-residue protein sequence, read N- to C-terminus: Adenine deaminase (564 aa).

It belongs to the metallo-dependent hydrolases superfamily. Adenine deaminase family. Requires Mn(2+) as cofactor.

The catalysed reaction is adenine + H2O + H(+) = hypoxanthine + NH4(+). The protein is Adenine deaminase of Methylobacterium sp. (strain 4-46).